We begin with the raw amino-acid sequence, 711 residues long: Interferon-induced GTP-binding protein Mx2 (711 aa).

The Dynamin-type G domain occupies 115–387; sequence DLALPAIAVI…LILHINKSLP (273 aa). A G1 motif region spans residues 125–132; that stretch reads GDQSSGKS. 125–132 is a GTP binding site; the sequence is GDQSSGKS. Positions 150–152 are G2 motif; the sequence is VTR. The segment at 225-228 is G3 motif; the sequence is DLPG. Residues 225–229 and 294–297 contribute to the GTP site; these read DLPGI and TKPD. The interval 294–297 is G4 motif; it reads TKPD. The G5 motif stretch occupies residues 326-329; the sequence is RCRG. The GED domain maps to 623-711; sequence NDEIGVHLNA…ARRALYMFFS (89 aa).

This sequence belongs to the TRAFAC class dynamin-like GTPase superfamily. Dynamin/Fzo/YdjA family.

It is found in the cytoplasm. The protein resides in the nucleus. Its function is as follows. Interferon-induced dynamin-like GTPase with antiviral activity against vesicular stomatitis virus (VSV). The chain is Interferon-induced GTP-binding protein Mx2 (MX2) from Canis lupus familiaris (Dog).